The chain runs to 156 residues: Transcriptional repressor NrdR (156 aa).

A zinc finger lies at 3 to 34 (CPYCGETEDKVIDSRQGKEADVIRRRRECLSC). Residues 49–139 (LVIIKKDGRR…VYREFKHVND (91 aa)) form the ATP-cone domain.

It belongs to the NrdR family. Zn(2+) is required as a cofactor.

Negatively regulates transcription of bacterial ribonucleotide reductase nrd genes and operons by binding to NrdR-boxes. This Desulfatibacillum aliphaticivorans protein is Transcriptional repressor NrdR.